A 708-amino-acid polypeptide reads, in one-letter code: Transcriptional regulator nsrM (708 aa).

A DNA-binding region (zn(2)-C6 fungal-type) is located at residues 37 to 63 (CVRCQQRKVRCDHKSPCGNCVASDSQC).

The protein resides in the nucleus. Functionally, transcriptional regulator; part of the gene cluster that mediates the biosynthesis of the tetrahydroxanthone dimer neosartorin, which exhibits antibacterial activity. The polypeptide is Transcriptional regulator nsrM (Aspergillus novofumigatus (strain IBT 16806)).